The sequence spans 338 residues: Ankyrin-repeat domain containing transcription coregulator asaA (338 aa).

A compositionally biased stretch (basic and acidic residues) spans 1-10 (MGAPHEEIQA). Disordered regions lie at residues 1 to 70 (MGAP…LRST) and 112 to 137 (ASSV…PFID). Positions 11-33 (LKRRREQNRLAQRRRRDNVRRRL) are enriched in basic residues. Positions 42–70 (SPASASQTSLCSSTDSRVTLNPHQSLRST) are enriched in polar residues. Over residues 112-130 (ASSVSPSSSAGPLSSSPSP) the composition is skewed to low complexity. 3 ANK repeats span residues 235–264 (RWTT…DPNA), 268–297 (EGAT…DPTL), and 301–330 (AGWL…PVDY).

The protein operates within secondary metabolite biosynthesis. Functionally, transcription coregulator involved in regulation of gene cluster that mediates the biosynthesis of aspergillic acid, a hydroxamic acid-containing pyrazinone with aliphatic side chains that originates from leucine (Leu) and isoleucine (Ile). Aspergillic acid has antibiotic properties and was shown to be lethal to mice. In Aspergillus flavus (strain ATCC 200026 / FGSC A1120 / IAM 13836 / NRRL 3357 / JCM 12722 / SRRC 167), this protein is Ankyrin-repeat domain containing transcription coregulator asaA.